Reading from the N-terminus, the 233-residue chain is Phosphoribosylformylglycinamidine synthase subunit PurQ (233 aa).

A Glutamine amidotransferase type-1 domain is found at R9–S233. The active-site Nucleophile is the C92. Active-site residues include H201 and E203.

As to quaternary structure, part of the FGAM synthase complex composed of 1 PurL, 1 PurQ and 2 PurS subunits.

It localises to the cytoplasm. It carries out the reaction N(2)-formyl-N(1)-(5-phospho-beta-D-ribosyl)glycinamide + L-glutamine + ATP + H2O = 2-formamido-N(1)-(5-O-phospho-beta-D-ribosyl)acetamidine + L-glutamate + ADP + phosphate + H(+). The catalysed reaction is L-glutamine + H2O = L-glutamate + NH4(+). It functions in the pathway purine metabolism; IMP biosynthesis via de novo pathway; 5-amino-1-(5-phospho-D-ribosyl)imidazole from N(2)-formyl-N(1)-(5-phospho-D-ribosyl)glycinamide: step 1/2. In terms of biological role, part of the phosphoribosylformylglycinamidine synthase complex involved in the purines biosynthetic pathway. Catalyzes the ATP-dependent conversion of formylglycinamide ribonucleotide (FGAR) and glutamine to yield formylglycinamidine ribonucleotide (FGAM) and glutamate. The FGAM synthase complex is composed of three subunits. PurQ produces an ammonia molecule by converting glutamine to glutamate. PurL transfers the ammonia molecule to FGAR to form FGAM in an ATP-dependent manner. PurS interacts with PurQ and PurL and is thought to assist in the transfer of the ammonia molecule from PurQ to PurL. This Frankia casuarinae (strain DSM 45818 / CECT 9043 / HFP020203 / CcI3) protein is Phosphoribosylformylglycinamidine synthase subunit PurQ.